The chain runs to 523 residues: Mogroside I-A1 synthase (523 aa).

H39 serves as the catalytic Proton acceptor. The Charge relay role is filled by D136. Residues S311, Q374, W392, N393, S394, E397, D413, and Q414 each coordinate UDP-alpha-D-glucose.

This sequence belongs to the UDP-glycosyltransferase family. Highly expressed in young fruits 15 and 34 days after anthesis (15-DAA and 34-DAA).

The catalysed reaction is mogrol + UDP-alpha-D-glucose = mogroside I-A1 + UDP + H(+). It carries out the reaction mogroside I-A1 + UDP-alpha-D-glucose = mogroside IIE + UDP + H(+). The enzyme catalyses mogroside IE + UDP-alpha-D-glucose = mogroside IIE + UDP + H(+). It catalyses the reaction mogroside II-A1 + UDP-alpha-D-glucose = mogroside IIIX + UDP + H(+). The catalysed reaction is mogroside II-A + UDP-alpha-D-glucose = mogroside III + UDP + H(+). It carries out the reaction mogroside IIE + UDP-alpha-D-glucose = mogroside III-C3(1-&gt;6) + UDP + H(+). The enzyme catalyses mogroside III + UDP-alpha-D-glucose = isomogroside IV + UDP + H(+). It catalyses the reaction mogroside III + UDP-alpha-D-glucose = mogroside IV + UDP + H(+). The catalysed reaction is mogroside IIIX + UDP-alpha-D-glucose = mogroside IVA + UDP + H(+). It carries out the reaction siamenoside I + UDP-alpha-D-glucose = isomogroside V + UDP + H(+). It functions in the pathway secondary metabolite biosynthesis; terpenoid biosynthesis. In terms of biological role, UDP-glycosyltransferase involved in the biosynthesis of cucurbitacin and mogroside tetracyclic triterpene natural products (e.g. siamenoside I and mogrosides IV, V and VI). Cucurbitacins have cytotoxic properties and exhibit deterrent taste as a defense barrier against herbivores. Mogrosides are nonsugar highly oxygenated compounds used as high-intensity zero-calorie sweeteners; they also possess pharmacological properties such as regulating immunity, lowering blood sugar and lipid levels, protecting the liver, and acting as antioxidants and antitumor agents. Catalyzes the C24 primary glucosylation of mogrol and mogroside I-E1, and the C3 primary glucosylation of mogroside I-A1, mogroside II-A1 and mogroside II-A. Also supports branching glucosylations of mogroside II-E, mogroside III, mogroside IIIx and siamenoside I. The chain is Mogroside I-A1 synthase from Siraitia grosvenorii (Monk's fruit).